Consider the following 43-residue polypeptide: METATLVAIFISCSLVSFTGYALYTAFGQPSKELRDPFEEHED.

Residues 5–27 (TLVAIFISCSLVSFTGYALYTAF) form a helical membrane-spanning segment.

It belongs to the PsbN family.

It localises to the plastid. It is found in the chloroplast thylakoid membrane. In terms of biological role, may play a role in photosystem I and II biogenesis. The protein is Protein PsbN of Exsertotheca crispa (Moss).